A 127-amino-acid polypeptide reads, in one-letter code: MARIAGVDIPREKRVEIALTYIFGIGPSRATQILLSTGINPNLRVRELTDVQVSLLREEIEQKYQVEGDLRRFENINIKRLMDIGCLRGRRHRLGLPVRGQRTRTNARTRRGGRKTVAGKKKAAAKK.

The tract at residues 97–127 (PVRGQRTRTNARTRRGGRKTVAGKKKAAAKK) is disordered. Residues 101–127 (QRTRTNARTRRGGRKTVAGKKKAAAKK) are compositionally biased toward basic residues.

This sequence belongs to the universal ribosomal protein uS13 family. In terms of assembly, part of the 30S ribosomal subunit. Forms a loose heterodimer with protein S19. Forms two bridges to the 50S subunit in the 70S ribosome.

Located at the top of the head of the 30S subunit, it contacts several helices of the 16S rRNA. In the 70S ribosome it contacts the 23S rRNA (bridge B1a) and protein L5 of the 50S subunit (bridge B1b), connecting the 2 subunits; these bridges are implicated in subunit movement. Contacts the tRNAs in the A and P-sites. This is Small ribosomal subunit protein uS13 from Gloeobacter violaceus (strain ATCC 29082 / PCC 7421).